A 430-amino-acid chain; its full sequence is tRNA(Ile)-lysidine synthase (430 aa).

21-26 (SGGLDS) contributes to the ATP binding site.

Belongs to the tRNA(Ile)-lysidine synthase family.

It is found in the cytoplasm. The enzyme catalyses cytidine(34) in tRNA(Ile2) + L-lysine + ATP = lysidine(34) in tRNA(Ile2) + AMP + diphosphate + H(+). Functionally, ligates lysine onto the cytidine present at position 34 of the AUA codon-specific tRNA(Ile) that contains the anticodon CAU, in an ATP-dependent manner. Cytidine is converted to lysidine, thus changing the amino acid specificity of the tRNA from methionine to isoleucine. The sequence is that of tRNA(Ile)-lysidine synthase from Salmonella paratyphi B (strain ATCC BAA-1250 / SPB7).